We begin with the raw amino-acid sequence, 367 residues long: Nodulation protein 10 (367 aa).

11 helical membrane passes run 15 to 37 (FDLL…WLHL), 46 to 66 (VFDL…SGFL), 88 to 108 (IFPA…VTGG), 109 to 129 (LNVT…LTAA), 155 to 175 (VLWT…LLEI), 183 to 203 (GALV…HFNI), 208 to 228 (NPFL…GVLA), 245 to 265 (WWLA…AAFI), 270 to 290 (AAPV…SAAH), 312 to 332 (MLVM…LWIV), and 335 to 355 (VGTV…AMKL).

This sequence belongs to the acyltransferase 3 family.

It is found in the cell membrane. Its function is as follows. Not known. NodX allows Rhizobium leguminosarum biovar viciae strain TOM to nodulate Afghanistan peas. The chain is Nodulation protein 10 (nodX) from Rhizobium leguminosarum bv. viciae.